The chain runs to 354 residues: Guanine nucleotide-binding protein G(i) subunit alpha-3 (354 aa).

Gly-2 carries N-myristoyl glycine lipidation. A lipid anchor (S-palmitoyl cysteine) is attached at Cys-3. A G-alpha domain is found at 32 to 354 (KEVKLLLLGA…KNNLKECGLY (323 aa)). The G1 motif stretch occupies residues 35–48 (KLLLLGAGESGKST). Residues Gly-42, Glu-43, Ser-44, Gly-45, Lys-46, Ser-47, Thr-48, Asp-150, Ser-151, Leu-175, Arg-176, Thr-177, Arg-178, Val-179, Lys-180, Thr-181, Val-201, Gly-203, Asn-269, Lys-270, Asp-272, Leu-273, Cys-325, Ala-326, and Thr-327 each contribute to the GTP site. Ser-47 contacts Mg(2+). A G2 motif region spans residues 173–181 (DVLRTRVKT). Thr-181 provides a ligand contact to Mg(2+). Residues 196 to 205 (FKMFDVGGQR) form a G3 motif region. The G4 motif stretch occupies residues 265–272 (ILFLNKKD). Residues 324 to 329 (TCATDT) are G5 motif.

This sequence belongs to the G-alpha family. G(i/o/t/z) subfamily. As to quaternary structure, heterotrimeric G proteins are composed of 3 units; alpha, beta and gamma. The alpha subunit contains the guanine nucleotide binding site. GTP binding causes dissociation of the heterotrimer, liberating the individual subunits so that they can interact with downstream effector proteins. Forms a complex with CCDC88A/GIV and EGFR which leads to enhanced EGFR signaling and triggering of cell migration; ligand stimulation is required for recruitment of GNAI3 to the complex. Interacts (inactive GDP-bound form) with CCDC88A/GIV (via GBA motif); the interaction leads to activation of GNAI3. Interacts (inactive GDP-bound form) with CCDC88C/DAPLE (via GBA motif); the interaction leads to activation of GNAI3. Interacts (inactive GDP-bound form) with NUCB1 (via GBA motif) and NUCB2 (via GBA motif); the interaction leads to activation of GNAI3. Interacts (inactive GDP-bound form) with PLCD4 (via GBA motif); the interaction leads to activation of GNAI3. Interacts with INSR; the interaction is probably mediated by CCDC88A/GIV. Interacts with GPSM1. Interacts (GDP-bound form) with GPSM2 (via GoLoco domains). Does not interact with RGS2. Interacts with RGS8 and RGS10; this strongly enhances the intrinsic GTPase activity. Interacts with RGS16; this strongly enhances the intrinsic GTPase activity. Interacts with RGS12. Interacts (via active GTP- or inactive GDP-bound form) with RGS14. Interacts (via active GTP-bound form) with TRPC5 (via ANK repeats) in a homotetrameric ion channel; the interaction is direct and activates the channel activity.

It is found in the cytoplasm. Its subcellular location is the cell membrane. The protein resides in the cytoskeleton. The protein localises to the microtubule organizing center. It localises to the centrosome. Functionally, heterotrimeric guanine nucleotide-binding proteins (G proteins) function as transducers downstream of G protein-coupled receptors (GPCRs) in numerous signaling cascades. The alpha chain contains the guanine nucleotide binding site and alternates between an active, GTP-bound state and an inactive, GDP-bound state. Signaling by an activated GPCR promotes GDP release and GTP binding. The alpha subunit has a low GTPase activity that converts bound GTP to GDP, thereby terminating the signal. Both GDP release and GTP hydrolysis are modulated by numerous regulatory proteins. Signaling is mediated via effector proteins, such as adenylate cyclase. Inhibits adenylate cyclase activity, leading to decreased intracellular cAMP levels. Stimulates the activity of receptor-regulated K(+) channels. The active GTP-bound form prevents the association of RGS14 with centrosomes and is required for the translocation of RGS14 from the cytoplasm to the plasma membrane. May play a role in cell division. The active GTP-bound form activates the calcium permeant TRPC5 ion channels. In Cricetulus griseus (Chinese hamster), this protein is Guanine nucleotide-binding protein G(i) subunit alpha-3 (GNAI3).